An 87-amino-acid chain; its full sequence is DNA-directed RNA polymerase subunit omega (87 aa).

The protein belongs to the RNA polymerase subunit omega family. In terms of assembly, the RNAP catalytic core consists of 2 alpha, 1 beta, 1 beta' and 1 omega subunit. When a sigma factor is associated with the core the holoenzyme is formed, which can initiate transcription.

The enzyme catalyses RNA(n) + a ribonucleoside 5'-triphosphate = RNA(n+1) + diphosphate. In terms of biological role, promotes RNA polymerase assembly. Latches the N- and C-terminal regions of the beta' subunit thereby facilitating its interaction with the beta and alpha subunits. This Ectopseudomonas mendocina (strain ymp) (Pseudomonas mendocina) protein is DNA-directed RNA polymerase subunit omega.